Consider the following 94-residue polypeptide: Co-chaperonin GroES (94 aa).

The protein belongs to the GroES chaperonin family. In terms of assembly, heptamer of 7 subunits arranged in a ring. Interacts with the chaperonin GroEL.

Its subcellular location is the cytoplasm. Together with the chaperonin GroEL, plays an essential role in assisting protein folding. The GroEL-GroES system forms a nano-cage that allows encapsulation of the non-native substrate proteins and provides a physical environment optimized to promote and accelerate protein folding. GroES binds to the apical surface of the GroEL ring, thereby capping the opening of the GroEL channel. The polypeptide is Co-chaperonin GroES (Alkaliphilus oremlandii (strain OhILAs) (Clostridium oremlandii (strain OhILAs))).